The chain runs to 239 residues: Large ribosomal subunit protein mL67 (239 aa).

This sequence belongs to the mitochondrion-specific ribosomal protein mL67 family. As to quaternary structure, component of the mitochondrial large ribosomal subunit (mt-LSU).

Its subcellular location is the nucleus. The protein resides in the mitochondrion. Component of the mitochondrial ribosome (mitoribosome), a dedicated translation machinery responsible for the synthesis of mitochondrial genome-encoded proteins, including at least some of the essential transmembrane subunits of the mitochondrial respiratory chain. The mitoribosomes are attached to the mitochondrial inner membrane and translation products are cotranslationally integrated into the membrane. mL67/MHR1 also has extraribosomal functions, being involved in regulation of mitochondrial DNA recombination, maintenance and repair, and generation of homoplasmic cells. mL67/MHR1 also acts as transcription factor involved in regulation of RNA polymerase II-dependent transcription. The polypeptide is Large ribosomal subunit protein mL67 (MHR1) (Candida albicans (strain SC5314 / ATCC MYA-2876) (Yeast)).